The following is a 1250-amino-acid chain: DNA-directed RNA polymerase subunit beta (1250 aa).

Positions 1139–1226 (GGAELAKPAP…DLFDEGDEDL (88 aa)) are disordered. Composition is skewed to acidic residues over residues 1155 to 1183 (ESGEAGEESEGEPEEEDVEEIDVPLDPEE) and 1207 to 1226 (ADDDQEMDEEDLFDEGDEDL).

Belongs to the RNA polymerase beta chain family. In terms of assembly, the RNAP catalytic core consists of 2 alpha, 1 beta, 1 beta' and 1 omega subunit. When a sigma factor is associated with the core the holoenzyme is formed, which can initiate transcription.

It catalyses the reaction RNA(n) + a ribonucleoside 5'-triphosphate = RNA(n+1) + diphosphate. Its function is as follows. DNA-dependent RNA polymerase catalyzes the transcription of DNA into RNA using the four ribonucleoside triphosphates as substrates. The protein is DNA-directed RNA polymerase subunit beta of Symbiobacterium thermophilum (strain DSM 24528 / JCM 14929 / IAM 14863 / T).